The chain runs to 243 residues: Leucyl/phenylalanyl-tRNA--protein transferase (243 aa).

Belongs to the L/F-transferase family.

The protein localises to the cytoplasm. The enzyme catalyses N-terminal L-lysyl-[protein] + L-leucyl-tRNA(Leu) = N-terminal L-leucyl-L-lysyl-[protein] + tRNA(Leu) + H(+). It carries out the reaction N-terminal L-arginyl-[protein] + L-leucyl-tRNA(Leu) = N-terminal L-leucyl-L-arginyl-[protein] + tRNA(Leu) + H(+). The catalysed reaction is L-phenylalanyl-tRNA(Phe) + an N-terminal L-alpha-aminoacyl-[protein] = an N-terminal L-phenylalanyl-L-alpha-aminoacyl-[protein] + tRNA(Phe). In terms of biological role, functions in the N-end rule pathway of protein degradation where it conjugates Leu, Phe and, less efficiently, Met from aminoacyl-tRNAs to the N-termini of proteins containing an N-terminal arginine or lysine. The chain is Leucyl/phenylalanyl-tRNA--protein transferase from Vibrio cholerae serotype O1 (strain ATCC 39315 / El Tor Inaba N16961).